A 637-amino-acid polypeptide reads, in one-letter code: Chaperone protein HtpG (637 aa).

Residues 1–345 (MSQQETHGFQ…SNDLPLNVSR (345 aa)) are a; substrate-binding. The tract at residues 346–562 (EILQDNQVTT…EGEMSTQMIK (217 aa)) is b. The interval 563-637 (LMQAAGQAVP…MNQMLLANAK (75 aa)) is c.

It belongs to the heat shock protein 90 family. In terms of assembly, homodimer.

Its subcellular location is the cytoplasm. Functionally, molecular chaperone. Has ATPase activity. This Shewanella denitrificans (strain OS217 / ATCC BAA-1090 / DSM 15013) protein is Chaperone protein HtpG.